A 347-amino-acid polypeptide reads, in one-letter code: tRNA N6-adenosine threonylcarbamoyltransferase (347 aa).

Fe cation is bound by residues H117 and H121. Residues 140 to 144, D173, G186, and N280 contribute to the substrate site; that span reads LVSGG. A Fe cation-binding site is contributed by D308.

This sequence belongs to the KAE1 / TsaD family. The cofactor is Fe(2+).

The protein resides in the cytoplasm. It catalyses the reaction L-threonylcarbamoyladenylate + adenosine(37) in tRNA = N(6)-L-threonylcarbamoyladenosine(37) in tRNA + AMP + H(+). Its function is as follows. Required for the formation of a threonylcarbamoyl group on adenosine at position 37 (t(6)A37) in tRNAs that read codons beginning with adenine. Is involved in the transfer of the threonylcarbamoyl moiety of threonylcarbamoyl-AMP (TC-AMP) to the N6 group of A37, together with TsaE and TsaB. TsaD likely plays a direct catalytic role in this reaction. The chain is tRNA N6-adenosine threonylcarbamoyltransferase from Psychrobacter sp. (strain PRwf-1).